The following is a 103-amino-acid chain: MAAKLRKGDKVVVLAGKDKGKEGTITSVDPKAGKAVVDGVNIAIRHTRQTQTSQGGRLPKALPIDLSNLALLDKNGKATRVGFRMEGDKKVRFAKTTGDVIDA.

Belongs to the universal ribosomal protein uL24 family. As to quaternary structure, part of the 50S ribosomal subunit.

In terms of biological role, one of two assembly initiator proteins, it binds directly to the 5'-end of the 23S rRNA, where it nucleates assembly of the 50S subunit. Functionally, one of the proteins that surrounds the polypeptide exit tunnel on the outside of the subunit. The sequence is that of Large ribosomal subunit protein uL24 from Ruegeria pomeroyi (strain ATCC 700808 / DSM 15171 / DSS-3) (Silicibacter pomeroyi).